Consider the following 393-residue polypeptide: 5-amino-6-(D-ribitylamino)uracil--L-tyrosine 4-hydroxyphenyl transferase (393 aa).

Residues 67–322 (VTYVINRNIN…GQWIVNHQPS (256 aa)) form the Radical SAM core domain. [4Fe-4S] cluster-binding residues include cysteine 81, cysteine 85, and cysteine 88.

It belongs to the radical SAM superfamily. CofH family. Consists of two subunits, CofG and CofH. It depends on [4Fe-4S] cluster as a cofactor.

It catalyses the reaction 5-amino-6-(D-ribitylamino)uracil + L-tyrosine + S-adenosyl-L-methionine = 5-amino-5-(4-hydroxybenzyl)-6-(D-ribitylimino)-5,6-dihydrouracil + 2-iminoacetate + 5'-deoxyadenosine + L-methionine + H(+). It participates in cofactor biosynthesis; coenzyme F0 biosynthesis. Catalyzes the radical-mediated synthesis of 5-amino-5-(4-hydroxybenzyl)-6-(D-ribitylimino)-5,6-dihydrouracil from 5-amino-6-(D-ribitylamino)uracil and L-tyrosine. This is 5-amino-6-(D-ribitylamino)uracil--L-tyrosine 4-hydroxyphenyl transferase from Thermosynechococcus vestitus (strain NIES-2133 / IAM M-273 / BP-1).